The sequence spans 118 residues: uncharacterized protein (118 aa).

The protein to S.pombe tam6.

Its subcellular location is the mitochondrion. This is an uncharacterized protein from Saccharomyces cerevisiae (strain ATCC 204508 / S288c) (Baker's yeast).